Consider the following 483-residue polypeptide: MPSITKQIMSGAKWTSISTMCITIIQIVQFALLGNMMTLTEFGLVGMITTVTVFAQIVLDMGFGAALIQRDDATERQLSTLYWLNIMTGVLLFVLLYVSSPVIAGFYQREELVFLVRILAIMFLIAPIGQQYQYMLQKQLHFNTLSKIEIFSNVLSFGYLAIAVFMMDAILAYVISQVLLQSSKGILYWAVYRKKWHPAFVFDLRGMKDFFSFGAFQLSSRLVNRLGANIDMILIGRFIGAEALGIYNLAYQIVTIPVLKINPIVTRVAFPIFAKNKYENSVIREGFLNMTKMLALVSFPLLIGLVSVSDAFITAVFGEKWLAAVPILNVLAIVGILRVLMNPNGSVLLAKGRADLAFYWDSGVLLLYGLSLFAAVQTGSLLTVAWVYAIISVVNFLIGRWLLAYVIKLNLSAYFQSIMKPFLITAAMGIIAFGVSLSTEHFSMQAEMRLAISVAAGALCYLFLLVKAYPQTKSKLLRKGRLS.

Transmembrane regions (helical) follow at residues 15–34 (TSIS…ALLG), 41–63 (EFGL…DMGF), 83–105 (WLNI…VIAG), 112–134 (LVFL…QYQY), 154–176 (VLSF…YVIS), 294–316 (LALV…ITAV), 321–343 (WLAA…LMNP), 356–378 (LAFY…AVQT), 382–404 (LTVA…WLLA), 411–433 (LSAY…IIAF), and 448–470 (MRLA…KAYP).

Belongs to the polysaccharide synthase family.

It is found in the cell membrane. Its pathway is cell wall biogenesis; teichuronic acid biosynthesis. Functionally, might be involved in the translocation of teichuronic acid repeating units from the inner to the outer surface of the membrane. The polypeptide is Teichuronic acid biosynthesis protein TuaB (tuaB) (Bacillus subtilis (strain 168)).